Consider the following 425-residue polypeptide: Pleckstrin homology domain-containing family A member 2 (425 aa).

One can recognise a PH 1 domain in the interval 7–113 (QNRICGFLDI…WVEALNQASK (107 aa)). Residue lysine 141 forms a Glycyl lysine isopeptide (Lys-Gly) (interchain with G-Cter in SUMO2) linkage. Phosphoserine is present on serine 184. In terms of domain architecture, PH 2 spans 198 to 298 (PLIKSGYCVK…WIKEIGAAVQ (101 aa)). Residues serine 314 and serine 349 each carry the phosphoserine modification. A disordered region spans residues 374–410 (AEDSLFTPRLGESSTSAVLPSSRIRHRSEPQHPKEKP). Residues 400-410 (RSEPQHPKEKP) are compositionally biased toward basic and acidic residues.

Binds MPDZ and PTPN13.

Its subcellular location is the cytoplasm. It localises to the cell membrane. It is found in the nucleus. Its function is as follows. Binds specifically to phosphatidylinositol 3,4-diphosphate (PtdIns3,4P2), but not to other phosphoinositides. May recruit other proteins to the plasma membrane. This chain is Pleckstrin homology domain-containing family A member 2 (PLEKHA2), found in Bos taurus (Bovine).